The chain runs to 49 residues: MKKKVTLACKNCGNRNYTTMKSSAALAERLEVKKYCNNCNSHTVHLETK.

It belongs to the bacterial ribosomal protein bL33 family.

This is Large ribosomal subunit protein bL33A from Bacillus licheniformis (strain ATCC 14580 / DSM 13 / JCM 2505 / CCUG 7422 / NBRC 12200 / NCIMB 9375 / NCTC 10341 / NRRL NRS-1264 / Gibson 46).